We begin with the raw amino-acid sequence, 197 residues long: Recombination protein RecR (197 aa).

A C4-type zinc finger spans residues 56–71; the sequence is CQRCHSFSDEAVCPLC. The region spanning 79 to 174 is the Toprim domain; that stretch reads TLLCVVETAA…KVTRLAQGVP (96 aa).

The protein belongs to the RecR family.

Functionally, may play a role in DNA repair. It seems to be involved in an RecBC-independent recombinational process of DNA repair. It may act with RecF and RecO. The sequence is that of Recombination protein RecR from Psychrobacter cryohalolentis (strain ATCC BAA-1226 / DSM 17306 / VKM B-2378 / K5).